Here is a 192-residue protein sequence, read N- to C-terminus: Ion-translocating oxidoreductase complex subunit A (192 aa).

6 helical membrane-spanning segments follow: residues 5–25, 39–59, 65–85, 102–122, 134–154, and 171–191; these read ALIL…FLGL, TGMG…SYLV, APLG…AAVV, VLGI…VALL, ALYG…FASI, and AIAL…IGLV.

It belongs to the NqrDE/RnfAE family. In terms of assembly, the complex is composed of six subunits: RnfA, RnfB, RnfC, RnfD, RnfE and RnfG.

The protein resides in the cell inner membrane. Its function is as follows. Part of a membrane-bound complex that couples electron transfer with translocation of ions across the membrane. The chain is Ion-translocating oxidoreductase complex subunit A from Thioalkalivibrio sulfidiphilus (strain HL-EbGR7).